A 382-amino-acid chain; its full sequence is Probable dual-specificity RNA methyltransferase RlmN (382 aa).

The Proton acceptor role is filled by glutamate 118. The region spanning 124-370 (YDKRVTMCIS…TTVRDTRGSD (247 aa)) is the Radical SAM core domain. A disulfide bridge links cysteine 131 with cysteine 375. The [4Fe-4S] cluster site is built by cysteine 138, cysteine 142, and cysteine 145. S-adenosyl-L-methionine is bound by residues 196–197 (GE), serine 230, 253–255 (SLH), and asparagine 332. Catalysis depends on cysteine 375, which acts as the S-methylcysteine intermediate.

Belongs to the radical SAM superfamily. RlmN family. [4Fe-4S] cluster serves as cofactor.

The protein localises to the cytoplasm. It carries out the reaction adenosine(2503) in 23S rRNA + 2 reduced [2Fe-2S]-[ferredoxin] + 2 S-adenosyl-L-methionine = 2-methyladenosine(2503) in 23S rRNA + 5'-deoxyadenosine + L-methionine + 2 oxidized [2Fe-2S]-[ferredoxin] + S-adenosyl-L-homocysteine. The enzyme catalyses adenosine(37) in tRNA + 2 reduced [2Fe-2S]-[ferredoxin] + 2 S-adenosyl-L-methionine = 2-methyladenosine(37) in tRNA + 5'-deoxyadenosine + L-methionine + 2 oxidized [2Fe-2S]-[ferredoxin] + S-adenosyl-L-homocysteine. Specifically methylates position 2 of adenine 2503 in 23S rRNA and position 2 of adenine 37 in tRNAs. The sequence is that of Probable dual-specificity RNA methyltransferase RlmN from Kocuria rhizophila (strain ATCC 9341 / DSM 348 / NBRC 103217 / DC2201).